The following is a 263-amino-acid chain: Isoprenyl transferase (263 aa).

Residue aspartate 38 is part of the active site. Residue aspartate 38 participates in Mg(2+) binding. Residues 39–42, histidine 55, and 83–85 contribute to the substrate site; these read GNRR and STD. The active-site Proton acceptor is the asparagine 86. Residues phenylalanine 87, arginine 89, arginine 212, and 218-220 contribute to the substrate site; that span reads RLS. Glutamate 231 contacts Mg(2+).

The protein belongs to the UPP synthase family. Homodimer. Mg(2+) serves as cofactor.

Its function is as follows. Catalyzes the condensation of isopentenyl diphosphate (IPP) with allylic pyrophosphates generating different type of terpenoids. This is Isoprenyl transferase from Thermus thermophilus (strain ATCC 27634 / DSM 579 / HB8).